Consider the following 200-residue polypeptide: 3-isopropylmalate dehydratase small subunit (200 aa).

The protein belongs to the LeuD family. LeuD type 1 subfamily. In terms of assembly, heterodimer of LeuC and LeuD.

The enzyme catalyses (2R,3S)-3-isopropylmalate = (2S)-2-isopropylmalate. Its pathway is amino-acid biosynthesis; L-leucine biosynthesis; L-leucine from 3-methyl-2-oxobutanoate: step 2/4. Its function is as follows. Catalyzes the isomerization between 2-isopropylmalate and 3-isopropylmalate, via the formation of 2-isopropylmaleate. This chain is 3-isopropylmalate dehydratase small subunit, found in Pectobacterium carotovorum subsp. carotovorum (strain PC1).